Here is a 247-residue protein sequence, read N- to C-terminus: Oocyte zinc finger protein XlCOF20 (247 aa).

C2H2-type zinc fingers lie at residues 6 to 28 (YDCR…QRVH), 34 to 56 (FPCT…QRVH), 62 to 84 (FICS…LRVH), 90 to 112 (FVCT…QRVH), 118 to 140 (FTCT…LRVH), 146 to 168 (FVCT…LRVH), 174 to 196 (FMCA…QRIC), and 225 to 247 (QSCA…MRVH).

This sequence belongs to the krueppel C2H2-type zinc-finger protein family.

Its subcellular location is the nucleus. In terms of biological role, may be involved in transcriptional regulation. In Xenopus laevis (African clawed frog), this protein is Oocyte zinc finger protein XlCOF20.